We begin with the raw amino-acid sequence, 382 residues long: Mannitol-1-phosphate 5-dehydrogenase (382 aa).

3 to 14 (ALHFGAGNIGRG) provides a ligand contact to NAD(+).

This sequence belongs to the mannitol dehydrogenase family.

The enzyme catalyses D-mannitol 1-phosphate + NAD(+) = beta-D-fructose 6-phosphate + NADH + H(+). This Salmonella dublin (strain CT_02021853) protein is Mannitol-1-phosphate 5-dehydrogenase.